Here is a 484-residue protein sequence, read N- to C-terminus: Glutamate--tRNA ligase (484 aa).

The short motif at 11 to 21 is the 'HIGH' region element; sequence PSPTGLLHIGN. Residues 255 to 259 carry the 'KMSKS' region motif; the sequence is KLSKR. Lysine 258 provides a ligand contact to ATP.

It belongs to the class-I aminoacyl-tRNA synthetase family. Glutamate--tRNA ligase type 1 subfamily. As to quaternary structure, monomer.

It localises to the cytoplasm. It carries out the reaction tRNA(Glu) + L-glutamate + ATP = L-glutamyl-tRNA(Glu) + AMP + diphosphate. Functionally, catalyzes the attachment of glutamate to tRNA(Glu) in a two-step reaction: glutamate is first activated by ATP to form Glu-AMP and then transferred to the acceptor end of tRNA(Glu). This chain is Glutamate--tRNA ligase, found in Streptococcus suis (strain 98HAH33).